A 671-amino-acid chain; its full sequence is Anti-sigma-I factor RsgI2 (671 aa).

Residues 1 to 57 are Cytoplasmic-facing; it reads MSHYTGIILKLESDRAIVLTDGLDFMELKLKPGMQRGQHVIFDESDLYSAGLITRYK. The RsgI N-terminal anti-sigma domain occupies 4–51; the sequence is YTGIILKLESDRAIVLTDGLDFMELKLKPGMQRGQHVIFDESDLYSAG. The chain crosses the membrane as a helical span at residues 58 to 78; sequence SIIMPFSAFAAAAAVFLVILF. Topologically, residues 79 to 671 are extracellular; the sequence is SLRFVSISQE…SGTLYWGIEP (593 aa). Disordered stretches follow at residues 290-323 and 359-505; these read TEAQPVDIPKSSPTPASFTAHVPTPPKTPSIPHT and PVPV…APTE. The segment covering 359 to 379 has biased composition (low complexity); sequence PVPVSTPKPVSTPAYSSTPTP. Pro residues predominate over residues 380–400; sequence ESTPVPVSTPKPASTPTPAST. Low complexity predominate over residues 401–425; it reads PKPVSTPTHVSTPKPISTPTSTPRP. Pro residues predominate over residues 426 to 446; it reads ASTPKPTSTPTPESTPKPTST. Positions 447 to 491 are enriched in low complexity; the sequence is PAPVSTPTSTPIPTYTSTPASTPIPAYTSTPTSIPTLTPATSPAP. Positions 492 to 502 are enriched in pro residues; sequence TSSPTPIPSPA. The CBM3 domain maps to 508-671; the sequence is LLTKIELQAY…SGTLYWGIEP (164 aa). T554, D556, D637, S640, and D641 together coordinate Ca(2+).

As to quaternary structure, interacts (via RsgI N-terminal anti-sigma domain) with SigI2.

The protein localises to the cell membrane. Functionally, anti-sigma factor for SigI2. Negatively regulates SigI2 activity through direct interaction. Binding of the polysaccharide substrate to the extracellular C-terminal sensing domain of RsgI2 may induce a conformational change in its N-terminal cytoplasmic region, leading to the release and activation of SigI2. This chain is Anti-sigma-I factor RsgI2, found in Acetivibrio thermocellus (strain ATCC 27405 / DSM 1237 / JCM 9322 / NBRC 103400 / NCIMB 10682 / NRRL B-4536 / VPI 7372) (Clostridium thermocellum).